A 495-amino-acid chain; its full sequence is Fusicoccadiene 8-ol C-16 hydroxylase (495 aa).

A helical transmembrane segment spans residues 12–32 (VLLALIVWIGTTIIYNIYFHP). N-linked (GlcNAc...) asparagine glycans are attached at residues Asn-249 and Asn-317. Residue Cys-439 participates in heme binding.

This sequence belongs to the cytochrome P450 family. Heme serves as cofactor.

It localises to the membrane. Its pathway is mycotoxin biosynthesis. Functionally, cytochrome P450 monooxygenase; part of the gene cluster that mediates the biosynthesis of the diterpene glucoside brassicicene C. In the first step of the brassicicene C biosynthesis, the bifunctional diterpene synthase bsc8 that possesses both prenyl transferase and terpene cyclase activity, converts isopentenyl diphosphate and dimethylallyl diphosphate into geranylgeranyl diphosphate (GGDP) that is further converted into fusicocca-2,10(14)-diene, the first precursor for brassicicene C. Fusicocca-2,10(14)-diene is then substrate of cytochrome P450 monooxygenase bsc1 for hydroxylation at the C-8 position. Oxidation at C-16 position to aldehyde is then catalyzed by the cytochrome P450 monooyxygenase bsc7, yielding fusicocca-2,10(14)-diene-8-beta,16-diol. Follows the isomerization of the double bond and reduction of aldehyde to alcohol catalyzed by the short-chain dehydrogenase/reductase bsc3 to yield the diol compound fusicocca-1,10(14)-diene-8 beta,16-diol. The next step is the oxidation at the C-3 position of fusicocca-2,10(14)-diene-8-beta,16-diol catalyzed by the alpha-ketoglutarate dependent dioxygenase bsc9, to produce a triol compound. Methylation of the hydroxy group at position 16 is performed by the methyltransferase bsc6. 16-O-methylation is followed by oxidation at the C-13 position to ketone and an alkyl shift of the methyl group leads to brassicicene C. Although the probable acetyltransferase bsc4 is included in the gene cluster, no acetylation reactions are necessary for brassicicene C biosynthesis. However, the fact that brassicicene E, which is a structurally related compound having an acetoxy group at position 12, was previously isolated from another strain of A.brassicicola suggests that the ATCC 96836 strain might also produce a small amount of brassicicene E. The protein is Fusicoccadiene 8-ol C-16 hydroxylase of Alternaria brassicicola (Dark leaf spot agent).